The following is a 370-amino-acid chain: Ornithine carbamoyltransferase, mitochondrial (370 aa).

The transit peptide at 1–38 (MPSPLRTAPQPPLRAFHNPPALRRLYSSTSHSAATPAT) directs the protein to the mitochondrion. Residues 97 to 100 (STRT), Arg-148, His-175, and Gln-178 contribute to the carbamoyl phosphate site. The L-ornithine site is built by Asn-216, Asp-282, Ser-286, and Met-287. The Proton acceptor role is filled by Cys-324. Carbamoyl phosphate-binding positions include 324–325 (CL) and Arg-351.

Belongs to the aspartate/ornithine carbamoyltransferase superfamily. OTCase family. As to quaternary structure, homotrimer.

It localises to the mitochondrion matrix. It catalyses the reaction carbamoyl phosphate + L-ornithine = L-citrulline + phosphate + H(+). It functions in the pathway amino-acid biosynthesis; L-arginine biosynthesis; L-arginine from L-ornithine and carbamoyl phosphate: step 1/3. This Aspergillus niger protein is Ornithine carbamoyltransferase, mitochondrial (argB).